Reading from the N-terminus, the 378-residue chain is Secreted LysM effector ldpA (378 aa).

The signal sequence occupies residues 1-19 (MMKSIRFLASALALCLVDA). The span at 118 to 131 (WTPPTTTTRSTSSS) shows a compositional bias: low complexity. The segment at 118-139 (WTPPTTTTRSTSSSAGNGVTTP) is disordered. The LysM 1 domain maps to 152-198 (RFYLVVSGDSCYDIAAAQGISLDNFYTWNPAVGSSCGGLWPDYYVCV). The segment at 208–230 (TTTTTTTPTTTSTTTTTAGNGVT) is disordered. LysM domains are found at residues 245–291 (KFYQ…YVCV) and 330–376 (KFYL…YVCV).

Belongs to the secreted LysM effector family.

Its subcellular location is the secreted. It is found in the cell wall. It localises to the extracellular space. The protein localises to the extracellular matrix. Functionally, cell wall chitin of A.fumigatus recruits lung eosinophils during infection and ldpA might have a role in sequestration of chitin and act as triggers of host immunity to dampen host defense. The chain is Secreted LysM effector ldpA from Aspergillus fumigatus (strain ATCC MYA-4609 / CBS 101355 / FGSC A1100 / Af293) (Neosartorya fumigata).